A 1442-amino-acid chain; its full sequence is Clustered mitochondria protein homolog (1442 aa).

Disordered stretches follow at residues N38–D100 and G237–P258. Positions S82–D100 are enriched in basic and acidic residues. The Clu domain occupies R394 to L636. 2 stretches are compositionally biased toward basic and acidic residues: residues Q696–A714 and E737–T763. Disordered stretches follow at residues Q696–T763 and S949–C984. Polar residues predominate over residues S949–G958. TPR repeat units follow at residues A1087–V1120, A1213–Y1246, and G1248–T1281. The segment at R1373–S1442 is disordered. Low complexity predominate over residues S1380–Q1390. The segment covering A1424–S1442 has biased composition (polar residues).

It belongs to the CLU family.

Its subcellular location is the cytoplasm. Its function is as follows. mRNA-binding protein involved in proper cytoplasmic distribution of mitochondria. The polypeptide is Clustered mitochondria protein homolog (Aedes aegypti (Yellowfever mosquito)).